Reading from the N-terminus, the 184-residue chain is MGEKQILDADDIRRAMTRIAHEIVERNAGVRDVALVGVRRRGVPLALRLAAALEEIEGVRVPVGILDITLYRDDLGIRGPAPVVHATDIPFDINGRTVVLVDDVLYTGRTVRAALDALTDFGRPARIQLAVLIDRGHRELPIRADFVGKNVPTSRDERIATRLHEVDGGVDGVFIVRVSESTTE.

The PRPP-binding signature appears at 98-110 (VVLVDDVLYTGRT).

It belongs to the purine/pyrimidine phosphoribosyltransferase family. PyrR subfamily.

The enzyme catalyses UMP + diphosphate = 5-phospho-alpha-D-ribose 1-diphosphate + uracil. Its function is as follows. Regulates the transcription of the pyrimidine nucleotide (pyr) operon in response to exogenous pyrimidines. In terms of biological role, also displays a weak uracil phosphoribosyltransferase activity which is not physiologically significant. The chain is Bifunctional protein PyrR from Roseiflexus castenholzii (strain DSM 13941 / HLO8).